The primary structure comprises 75 residues: uncharacterized protein (75 aa).

4Fe-4S ferredoxin-type domains lie at 2–30 (SHTI…KGEG) and 37–68 (DWYW…KEEP). Positions 10 and 16 each coordinate [3Fe-4S] cluster. Residues C20, C46, C49, and C52 each contribute to the [4Fe-4S] cluster site. C56 lines the [3Fe-4S] cluster pocket.

[4Fe-4S] cluster is required as a cofactor. It depends on [3Fe-4S] cluster as a cofactor.

It localises to the plastid. The protein resides in the chloroplast. This is an uncharacterized protein from Porphyra purpurea (Red seaweed).